The primary structure comprises 482 residues: Complement C1r subcomponent-like protein (482 aa).

A signal peptide spans 1–43; the sequence is MSGFRGLVPELENSLWSSPTTSCMSKMCWWLLWGILHTCPTQA. The 123-residue stretch at 44-166 folds into the CUB domain; it reads SVLLAQQSPQ…KGFLALYQAV (123 aa). 2 disulfides stabilise this stretch: C97–C115 and C190–C223. One can recognise a Sushi domain in the interval 166 to 225; the sequence is VAVNQPNGDTEAVTTPGAPKIQNHCQDPYYKADQTGTLSCPSSWKWKDRQDGGEVPECVP. A Peptidase S1 domain is found at 240-479; that stretch reads TFGSSRAKLG…YMDWIKRVIE (240 aa). Active-site charge relay system residues include H278 and D334. Residue N358 is glycosylated (N-linked (GlcNAc...) asparagine). 2 disulfides stabilise this stretch: C397–C416 and C427–C457. S431 acts as the Charge relay system in catalysis.

This sequence belongs to the peptidase S1 family. Expressed in liver (at protein level).

The protein localises to the secreted. Functionally, mediates the proteolytic cleavage of HP/haptoglobin in the endoplasmic reticulum. The polypeptide is Complement C1r subcomponent-like protein (C1rl) (Mus musculus (Mouse)).